We begin with the raw amino-acid sequence, 285 residues long: Nucleotide-binding protein Avin_12760 (285 aa).

An ATP-binding site is contributed by G8–S15. Position 60 to 63 (D60 to N63) interacts with GTP.

Belongs to the RapZ-like family.

Functionally, displays ATPase and GTPase activities. In Azotobacter vinelandii (strain DJ / ATCC BAA-1303), this protein is Nucleotide-binding protein Avin_12760.